The chain runs to 340 residues: Ferrochelatase (340 aa).

2 residues coordinate Fe cation: His-189 and Glu-292.

This sequence belongs to the ferrochelatase family.

The protein localises to the cytoplasm. It carries out the reaction heme b + 2 H(+) = protoporphyrin IX + Fe(2+). It functions in the pathway porphyrin-containing compound metabolism; protoheme biosynthesis; protoheme from protoporphyrin-IX: step 1/1. Its function is as follows. Catalyzes the ferrous insertion into protoporphyrin IX. This is Ferrochelatase from Pseudomonas savastanoi pv. phaseolicola (strain 1448A / Race 6) (Pseudomonas syringae pv. phaseolicola (strain 1448A / Race 6)).